The sequence spans 449 residues: Secretin receptor (449 aa).

A signal peptide spans 1–25 (MLSTMRPRLSLLLLRLLLLTKAAHT). The Extracellular segment spans residues 26 to 141 (VGVPPRLCDV…NERRHAYLLK (116 aa)). 3 disulfides stabilise this stretch: cysteine 46-cysteine 75, cysteine 66-cysteine 107, and cysteine 89-cysteine 123. Asparagine 72, asparagine 100, asparagine 106, and asparagine 128 each carry an N-linked (GlcNAc...) asparagine glycan. Residues 142-167 (LKVMYTVGYSSSLAMLLVALSILCSF) traverse the membrane as a helical segment. Residues 168 to 174 (RRLHCTR) are Cytoplasmic-facing. The helical transmembrane segment at 175 to 195 (NYIHMHLFVSFILRALSNFIK) threads the bilayer. Topologically, residues 196–216 (DAVLFSSDDVTYCDAHKVGCK) are extracellular. A disulfide bond links cysteine 215 and cysteine 285. The chain crosses the membrane as a helical span at residues 217-239 (LVMIFFQYCIMANYAWLLVEGLY). Residues 240–254 (LHTLLAISFFSERKY) lie on the Cytoplasmic side of the membrane. The chain crosses the membrane as a helical span at residues 255–276 (LQAFVLLGWGSPAIFVALWAIT). Over 277–291 (RHFLENTGCWDINAN) the chain is Extracellular. Asparagine 291 is a glycosylation site (N-linked (GlcNAc...) asparagine). Residues 292-315 (ASVWWVIRGPVILSILINFIFFIN) traverse the membrane as a helical segment. The Cytoplasmic segment spans residues 316–340 (ILRILMRKLRTQETRGSETNHYKRL). The chain crosses the membrane as a helical span at residues 341–356 (AKSTLLLIPLFGIHYI). The Extracellular segment spans residues 357–367 (VFAFSPEDAME). Residues 368–391 (VQLFFELALGSFQGLVVAVLYCFL) traverse the membrane as a helical segment. Residues 392 to 449 (NGEVQLEVQKKWRQWHLQEFPLRPVAFNNSFSNATNGPTHSTKASTEQSRSIPRASII) lie on the Cytoplasmic side of the membrane. A compositionally biased stretch (polar residues) spans 425–442 (ATNGPTHSTKASTEQSRS). The interval 425–449 (ATNGPTHSTKASTEQSRSIPRASII) is disordered.

This sequence belongs to the G-protein coupled receptor 2 family. Phosphorylated on Ser and Thr residues at the cytoplasmic C-terminus by G protein-coupled receptor kinases (GRKs). Post-translationally, N-glycosylated. In terms of tissue distribution, in the brain, expressed in the central amygdala, hippocampus, area postrema, nucleus of the tractus solitary and cerebellum.

The protein resides in the cell membrane. Its subcellular location is the basolateral cell membrane. Functionally, g protein-coupled receptor activated by secretin (SCT), which is involved in different processes such as regulation of the pH of the duodenal content, food intake and water homeostasis. Ligand binding causes a conformation change that triggers signaling via guanine nucleotide-binding proteins (G proteins) and activates cAMP-dependent pathway. Upon binding to secretin, regulates the pH of the duodenum by (1) inhibiting the secretion of gastric acid from the parietal cells of the stomach and (2) stimulating the production of bicarbonate (NaHCO(3)) from the ductal cells of the pancreas. In addition to regulating the pH of the duodenal content, plays a central role in diet induced thermogenesis: acts as a non-sympathetic brown fat (BAT) activator mediating prandial thermogenesis, which consequentially induces satiation. Mechanistically, secretin released by the gut after a meal binds to secretin receptor (SCTR) in brown adipocytes, activating brown fat thermogenesis by stimulating lipolysis, which is sensed in the brain and promotes satiation. Also able to stimulate lipolysis in white adipocytes. Also plays an important role in cellular osmoregulation by regulating renal water reabsorption. Also plays a role in the central nervous system: required for synaptic plasticity. This Rattus norvegicus (Rat) protein is Secretin receptor.